The chain runs to 316 residues: uncharacterized protein (316 aa).

This sequence belongs to the chlamydial CPn_0441/CT_007/TC_0275 family.

This is an uncharacterized protein from Chlamydia muridarum (strain MoPn / Nigg).